Consider the following 541-residue polypeptide: Membrane protein insertase YidC (541 aa).

6 helical membrane passes run 6-26 (NILLIGLLFVSFLLWQQWQAD), 325-345 (LVVDYGFLWWLAVPIHWLLMF), 349-369 (FVGNWGMAIILITLTVRGLLF), 420-440 (GGCLPIILQMPIFIALYWVLL), 457-477 (LSVQDPYYILPLLMGVSMFVM), and 500-520 (VIFTVFFLWFPAGLVLYWLVG).

The protein belongs to the OXA1/ALB3/YidC family. Type 1 subfamily. As to quaternary structure, interacts with the Sec translocase complex via SecD. Specifically interacts with transmembrane segments of nascent integral membrane proteins during membrane integration.

It is found in the cell inner membrane. Its function is as follows. Required for the insertion and/or proper folding and/or complex formation of integral membrane proteins into the membrane. Involved in integration of membrane proteins that insert both dependently and independently of the Sec translocase complex, as well as at least some lipoproteins. Aids folding of multispanning membrane proteins. The protein is Membrane protein insertase YidC of Shewanella baltica (strain OS223).